The chain runs to 76 residues: Dermaseptin-B4 (76 aa).

A signal peptide spans 1 to 22; it reads MAFLKKSLFLVLFLGLVSLSIC. A propeptide spanning residues 23 to 43 is cleaved from the precursor; the sequence is EEEKRENKDEIEQEDDEQSEE. A Glutamine amide modification is found at Q73. Residues 75–76 constitute a propeptide that is removed on maturation; it reads EQ.

Belongs to the frog skin active peptide (FSAP) family. Dermaseptin subfamily. As to expression, expressed by the skin glands.

It localises to the secreted. Potent antimicrobial peptide with potent activity against Gram-positive and Gram-negative bacteria. Probably acts by disturbing membrane functions with its amphipathic structure. Has an activity of stimulation of insulin release, which may protect the species from being eaten by predators by causing fatal hypoglycemia. Has hemolytic activity. This Phyllomedusa bicolor (Two-colored leaf frog) protein is Dermaseptin-B4.